The sequence spans 375 residues: Histidine biosynthesis bifunctional protein HisB (375 aa).

Residues 1–168 are histidinol-phosphatase; it reads MTPIVFIDRD…GIAHTLADAP (168 aa). Aspartate 8 (nucleophile) is an active-site residue. Mg(2+)-binding residues include aspartate 8, aspartate 10, and aspartate 128. Aspartate 10 functions as the Proton donor in the catalytic mechanism. The segment at 169 to 375 is imidazoleglycerol-phosphate dehydratase; it reads RRAVVQRHTK…HVLPSTKGAL (207 aa).

The protein in the N-terminal section; belongs to the histidinol-phosphatase family. In the C-terminal section; belongs to the imidazoleglycerol-phosphate dehydratase family. It depends on Mg(2+) as a cofactor.

Its subcellular location is the cytoplasm. The catalysed reaction is D-erythro-1-(imidazol-4-yl)glycerol 3-phosphate = 3-(imidazol-4-yl)-2-oxopropyl phosphate + H2O. The enzyme catalyses L-histidinol phosphate + H2O = L-histidinol + phosphate. It participates in amino-acid biosynthesis; L-histidine biosynthesis; L-histidine from 5-phospho-alpha-D-ribose 1-diphosphate: step 6/9. Its pathway is amino-acid biosynthesis; L-histidine biosynthesis; L-histidine from 5-phospho-alpha-D-ribose 1-diphosphate: step 8/9. This Xylella fastidiosa (strain Temecula1 / ATCC 700964) protein is Histidine biosynthesis bifunctional protein HisB.